Consider the following 509-residue polypeptide: Cytochrome P450 monooxygenase aba1 (509 aa).

A signal peptide spans 1 to 31 (MSNSILNLGSFACLLSLGSIVLWYTISAVLA). Residue Asn-402 is glycosylated (N-linked (GlcNAc...) asparagine). Cys-451 is a binding site for heme. N-linked (GlcNAc...) asparagine glycosylation is present at Asn-462.

It belongs to the cytochrome P450 family. Requires heme as cofactor.

It participates in hormone biosynthesis. In terms of biological role, cytochrome P450 monooxygenase; part of the gene cluster that mediates the biosynthesis of abscisic acid (ABA), a phytohormone that acts antagonistically toward salicylic acid (SA), jasmonic acid (JA) and ethylene (ETH) signaling, to impede plant defense responses. The first step of the pathway catalyzes the reaction from farnesyl diphosphate to alpha-ionylideneethane performed by the alpha-ionylideneethane synthase aba3 via a three-step reaction mechanism involving 2 neutral intermediates, beta-farnesene and allofarnesene. The cytochrome P450 monooxygenase aba1 might then be involved in the conversion of alpha-ionylideneethane to alpha-ionylideneacetic acid. Alpha-ionylideneacetic acid is further converted to abscisic acid in 2 steps involving the cytochrome P450 monooxygenase aba2 and the short-chain dehydrogenase/reductase aba4, via the intermediates 1'-deoxy-ABA or 1',4'-trans-diol-ABA, depending on the order of action of these 2 enzymes. Aba2 is responsible for the hydroxylation of carbon atom C-1' and aba4 might be involved in the oxidation of the C-4' carbon atom. This Botryotinia fuckeliana (strain B05.10) (Noble rot fungus) protein is Cytochrome P450 monooxygenase aba1 (aba1).